The following is a 477-amino-acid chain: Chromosomal replication initiator protein DnaA (477 aa).

A domain I, interacts with DnaA modulators region spans residues 1–87 (MSDRSDPTHA…AGVSNFAIVV (87 aa)). The tract at residues 87-132 (VNPEIAQDAFAQHPEPAAEQPYIETPTITAPTDNPGLPASPSRGDS) is domain II. The segment at 112–131 (PTITAPTDNPGLPASPSRGD) is disordered. A domain III, AAA+ region region spans residues 133 to 349 (RLNPKYGFDT…GTLIRVTAFA (217 aa)). Residues G177, G179, K180, and T181 each contribute to the ATP site. Residues 350–477 (SLNKTPVDLA…IKQNHRYGKM (128 aa)) are domain IV, binds dsDNA.

It belongs to the DnaA family. As to quaternary structure, oligomerizes as a right-handed, spiral filament on DNA at oriC.

Its subcellular location is the cytoplasm. Its function is as follows. Plays an essential role in the initiation and regulation of chromosomal replication. ATP-DnaA binds to the origin of replication (oriC) to initiate formation of the DNA replication initiation complex once per cell cycle. Binds the DnaA box (a 9 base pair repeat at the origin) and separates the double-stranded (ds)DNA. Forms a right-handed helical filament on oriC DNA; dsDNA binds to the exterior of the filament while single-stranded (ss)DNA is stabiized in the filament's interior. The ATP-DnaA-oriC complex binds and stabilizes one strand of the AT-rich DNA unwinding element (DUE), permitting loading of DNA polymerase. After initiation quickly degrades to an ADP-DnaA complex that is not apt for DNA replication. Binds acidic phospholipids. In Clavibacter michiganensis subsp. michiganensis (strain NCPPB 382), this protein is Chromosomal replication initiator protein DnaA.